The following is a 295-amino-acid chain: Alpha-soluble NSF attachment protein (295 aa).

Met1 carries the post-translational modification N-acetylmethionine. Residues Ser26, Ser29, and Ser195 each carry the phosphoserine modification.

Belongs to the SNAP family. Interacts with PRKCABP, and disrupts the interaction between GRIA2 and PRKCABP, leading to the internalization of GRIA2. Found in a complex with VAMP8. Component of a SNARE-like complex that contains at least ZW10, USE1L, RINT1, STX18 and NAPA/SNAP-alpha. Interacts with VTI1A. Interacts with STX12. Interacts with GNA12 (via N-terminus); the interaction promotes CDH5 localization to plasma membrane.

Its subcellular location is the cell membrane. Required for vesicular transport between the endoplasmic reticulum and the Golgi apparatus. Together with GNA12 promotes CDH5 localization to plasma membrane. The protein is Alpha-soluble NSF attachment protein (NAPA) of Homo sapiens (Human).